We begin with the raw amino-acid sequence, 119 residues long: Large ribosomal subunit protein uL18 (119 aa).

Belongs to the universal ribosomal protein uL18 family. As to quaternary structure, part of the 50S ribosomal subunit; part of the 5S rRNA/L5/L18/L25 subcomplex. Contacts the 5S and 23S rRNAs.

Functionally, this is one of the proteins that bind and probably mediate the attachment of the 5S RNA into the large ribosomal subunit, where it forms part of the central protuberance. This Clostridium perfringens (strain 13 / Type A) protein is Large ribosomal subunit protein uL18.